Consider the following 372-residue polypeptide: Glutamate 5-kinase (372 aa).

Lys-14 contributes to the ATP binding site. Residues Ser-54, Asp-141, and Asn-153 each contribute to the substrate site. 173 to 174 (TD) provides a ligand contact to ATP. In terms of domain architecture, PUA spans 280-358 (RGRVVIDGGA…SEIESVLGHL (79 aa)).

It belongs to the glutamate 5-kinase family.

It localises to the cytoplasm. The enzyme catalyses L-glutamate + ATP = L-glutamyl 5-phosphate + ADP. The protein operates within amino-acid biosynthesis; L-proline biosynthesis; L-glutamate 5-semialdehyde from L-glutamate: step 1/2. In terms of biological role, catalyzes the transfer of a phosphate group to glutamate to form L-glutamate 5-phosphate. The sequence is that of Glutamate 5-kinase from Cupriavidus taiwanensis (strain DSM 17343 / BCRC 17206 / CCUG 44338 / CIP 107171 / LMG 19424 / R1) (Ralstonia taiwanensis (strain LMG 19424)).